A 286-amino-acid chain; its full sequence is Type II restriction enzyme NgoMIV (286 aa).

2 residues coordinate Mg(2+): Asp140 and Cys186.

As to quaternary structure, homotetramer. Requires Mg(2+) as cofactor.

It carries out the reaction Endonucleolytic cleavage of DNA to give specific double-stranded fragments with terminal 5'-phosphates.. A P subtype restriction enzyme that recognizes the double-stranded sequence 5'-GCCGGC-3' and cleaves after G-1. This Neisseria gonorrhoeae protein is Type II restriction enzyme NgoMIV (ngoMIVR).